Here is a 128-residue protein sequence, read N- to C-terminus: UPF0102 protein Rfer_3873 (128 aa).

The span at 1 to 15 shows a compositional bias: polar residues; the sequence is MAIPQIKTQVGTSKQ. A disordered region spans residues 1–20; sequence MAIPQIKTQVGTSKQAGDAA.

Belongs to the UPF0102 family.

This chain is UPF0102 protein Rfer_3873, found in Albidiferax ferrireducens (strain ATCC BAA-621 / DSM 15236 / T118) (Rhodoferax ferrireducens).